The primary structure comprises 190 residues: Potassium-transporting ATPase KdpC subunit (190 aa).

The chain crosses the membrane as a helical span at residues 10–30 (VLLLVLTGLTGFAYPLLSTAI).

The protein belongs to the KdpC family. In terms of assembly, the system is composed of three essential subunits: KdpA, KdpB and KdpC.

The protein resides in the cell inner membrane. Functionally, part of the high-affinity ATP-driven potassium transport (or Kdp) system, which catalyzes the hydrolysis of ATP coupled with the electrogenic transport of potassium into the cytoplasm. This subunit acts as a catalytic chaperone that increases the ATP-binding affinity of the ATP-hydrolyzing subunit KdpB by the formation of a transient KdpB/KdpC/ATP ternary complex. In Sorangium cellulosum (strain So ce56) (Polyangium cellulosum (strain So ce56)), this protein is Potassium-transporting ATPase KdpC subunit.